We begin with the raw amino-acid sequence, 428 residues long: L-fucose-proton symporter (428 aa).

The next 12 membrane-spanning stretches (helical) occupy residues 10 to 30 (FIVP…ANDI), 51 to 71 (LVQL…ALFA), 78 to 98 (AGIL…WPAA), 100 to 120 (YEIF…LAFL), 147 to 167 (FNPL…LTNL), 204 to 224 (IALG…KMPA), 250 to 270 (EGVI…TFIV), 288 to 308 (IIAM…MKYL), 311 to 331 (EFML…VIFI), 339 to 359 (CLIL…GIAL), 371 to 391 (AGLV…GMII), and 401 to 421 (AVNF…IYGF).

This sequence belongs to the major facilitator superfamily. FHS transporter (TC 2.A.1.7) family.

It is found in the cell inner membrane. It catalyses the reaction L-fucose(in) + H(+)(in) = L-fucose(out) + H(+)(out). Functionally, mediates the uptake of L-fucose across the boundary membrane with the concomitant transport of protons into the cell (symport system). The sequence is that of L-fucose-proton symporter (fucP) from Haemophilus influenzae (strain ATCC 51907 / DSM 11121 / KW20 / Rd).